Reading from the N-terminus, the 376-residue chain is Erythronate-4-phosphate dehydrogenase (376 aa).

2 residues coordinate substrate: S45 and T67. An NAD(+)-binding site is contributed by D147. R209 is an active-site residue. D233 lines the NAD(+) pocket. E238 is a catalytic residue. H255 acts as the Proton donor in catalysis. An NAD(+)-binding site is contributed by G258. Y259 serves as a coordination point for substrate.

The protein belongs to the D-isomer specific 2-hydroxyacid dehydrogenase family. PdxB subfamily. In terms of assembly, homodimer.

It is found in the cytoplasm. The enzyme catalyses 4-phospho-D-erythronate + NAD(+) = (R)-3-hydroxy-2-oxo-4-phosphooxybutanoate + NADH + H(+). It participates in cofactor biosynthesis; pyridoxine 5'-phosphate biosynthesis; pyridoxine 5'-phosphate from D-erythrose 4-phosphate: step 2/5. Catalyzes the oxidation of erythronate-4-phosphate to 3-hydroxy-2-oxo-4-phosphonooxybutanoate. This Shewanella sp. (strain ANA-3) protein is Erythronate-4-phosphate dehydrogenase.